The primary structure comprises 294 residues: N-acetylmuramic acid 6-phosphate etherase (294 aa).

One can recognise an SIS domain in the interval 56–219 (TSQALKKGGR…STLSMVSVGK (164 aa)). Catalysis depends on glutamate 84, which acts as the Proton donor. The active site involves glutamate 115.

Belongs to the GCKR-like family. MurNAc-6-P etherase subfamily. Homodimer.

It catalyses the reaction N-acetyl-D-muramate 6-phosphate + H2O = N-acetyl-D-glucosamine 6-phosphate + (R)-lactate. It functions in the pathway amino-sugar metabolism; 1,6-anhydro-N-acetylmuramate degradation. The protein operates within amino-sugar metabolism; N-acetylmuramate degradation. Its pathway is cell wall biogenesis; peptidoglycan recycling. In terms of biological role, specifically catalyzes the cleavage of the D-lactyl ether substituent of MurNAc 6-phosphate, producing GlcNAc 6-phosphate and D-lactate. Together with AnmK, is also required for the utilization of anhydro-N-acetylmuramic acid (anhMurNAc) either imported from the medium or derived from its own cell wall murein, and thus plays a role in cell wall recycling. This Francisella philomiragia subsp. philomiragia (strain ATCC 25017 / CCUG 19701 / FSC 153 / O#319-036) protein is N-acetylmuramic acid 6-phosphate etherase.